An 865-amino-acid polypeptide reads, in one-letter code: Nitrogen regulatory protein nrfA (865 aa).

5 disordered regions span residues 1-75 (MEGI…DEMQ), 115-140 (RKEREQQEREQQARASETVSPAPSGI), 177-227 (FDSP…QDQR), 557-605 (GSTD…RTAS), and 617-663 (LNGS…AGPT). The segment covering 32-46 (DDFTFDSPFSSSGSS) has biased composition (low complexity). Basic and acidic residues-rich tracts occupy residues 115 to 126 (RKEREQQEREQQ) and 180 to 189 (PAEHPSHPSA). The segment covering 582 to 592 (ASVSDVRNQNQ) has biased composition (polar residues). The segment at 665–689 (CTNCFTQTTPLWRRNPEGQPLCNAC) adopts a GATA-type zinc-finger fold. The tract at residues 713 to 854 (NRSSANTLAV…NHSIAGGQGA (142 aa)) is disordered. Polar residues-rich tracts occupy residues 715–724 (SSANTLAVGT) and 737–764 (IQHAPSTSISSRINTSESPPSMTGSNTL). Composition is skewed to low complexity over residues 771–786 (PIAAAPPKSGPPAGVA) and 830–844 (PLAPAMAPPAAANPA).

Its subcellular location is the nucleus. Functionally, major nitrogen regulatory protein. The chain is Nitrogen regulatory protein nrfA (nrfA) from Penicillium urticae.